The chain runs to 542 residues: Endonuclease 4 homolog (542 aa).

2 disordered regions span residues 89-123 and 141-234; these read NEEIIPESPPSKKLQQQQQQQQQQQSKLKPKQTSI and PFFS…ENKF. Composition is skewed to low complexity over residues 99–115 and 147–170; these read SKKLQQQQQQQQQQQSK and NNASTTNTTTNNKNVNKKTTTTTT. Residues 171–206 are a coiled coil; it reads TKKRNNKDEENEDDNEEEEEEEEEEEDKKSKKKTTT. The span at 179-196 shows a compositional bias: acidic residues; sequence EENEDDNEEEEEEEEEEE. Residues 205–215 are compositionally biased toward low complexity; it reads TTTTTTTTTTA. The segment covering 216–227 has biased composition (basic residues); sequence YKKKSSPKKKKV. A Nuclear localization signal motif is present at residues 222–227; the sequence is PKKKKV. Positions 328, 368, 404, 438, 441, 475, 488, 490, and 520 each coordinate Zn(2+).

The protein belongs to the AP endonuclease 2 family. It depends on Zn(2+) as a cofactor.

It localises to the nucleus. It catalyses the reaction Endonucleolytic cleavage to 5'-phosphooligonucleotide end-products.. Plays a role in DNA repair. It cleaves phosphodiester bonds at apurinic or apyrimidinic sites (AP sites) to produce new 5'-ends that are base-free deoxyribose 5-phosphate residues. This Dictyostelium discoideum (Social amoeba) protein is Endonuclease 4 homolog (apnA).